We begin with the raw amino-acid sequence, 428 residues long: Sialidase-3 (428 aa).

An FRIP motif motif is present at residues 24 to 27; that stretch reads YRIP. Substrate contacts are provided by Arg25 and Arg45. Residue Asp50 is the Proton acceptor of the active site. A BNR 1 repeat occupies 129-140; that stretch reads IYSQDAGCSWSE. Tyr179 and Tyr181 together coordinate substrate. The BNR 2 repeat unit spans residues 203–214; it reads IYSDDLGVTWHH. Residues Glu225 and Arg245 each contribute to the substrate site. One copy of the BNR 3 repeat lies at 254–265; sequence ALSTDHGEGFQR. Positions 294 to 318 are disordered; it reads RCQDSSSKDAPTIQQSSPGSSLRLE. Polar residues predominate over residues 301–313; that stretch reads KDAPTIQQSSPGS. Ser313 is subject to Phosphoserine. Residue Arg340 participates in substrate binding. Tyr370 functions as the Nucleophile in the catalytic mechanism. The active site involves Glu387.

Belongs to the glycosyl hydrolase 33 family. In terms of assembly, interacts with CAV1; this interaction enhances NEU3 sialidase activity within caveola. Interacts with EGFR; this interaction mediates desialylation of EGFR and enhances downstream signaling. Post-translationally, palmitoylated; may regulate intracellular trafficking and anchorage to plasma membrane and endomembranes. In terms of tissue distribution, highly expressed in skeletal muscle, testis, adrenal gland and thymus, followed by pancreas, liver, heart and thymus. Weakly expressed in kidney, placenta, brain and lung.

It localises to the cell membrane. The protein resides in the membrane. It is found in the caveola. Its subcellular location is the early endosome membrane. The protein localises to the recycling endosome membrane. It localises to the lysosome membrane. The enzyme catalyses Hydrolysis of alpha-(2-&gt;3)-, alpha-(2-&gt;6)-, alpha-(2-&gt;8)- glycosidic linkages of terminal sialic acid residues in oligosaccharides, glycoproteins, glycolipids, colominic acid and synthetic substrates.. It catalyses the reaction a ganglioside GD1a + H2O = a ganglioside GM1 + N-acetylneuraminate. It carries out the reaction a ganglioside GD1a (d18:1(4E)) + H2O = a ganglioside GM1 (d18:1(4E)) + N-acetylneuraminate. The catalysed reaction is a ganglioside GD1b + H2O = a ganglioside GM1 + N-acetylneuraminate. The enzyme catalyses a ganglioside GD1b (d18:1(4E)) + H2O = a ganglioside GM1 (d18:1(4E)) + N-acetylneuraminate. It catalyses the reaction a ganglioside GD3 + H2O = a ganglioside GM3 + N-acetylneuraminate. It carries out the reaction a ganglioside GD3 (d18:1(4E)) + H2O = a ganglioside GM3 (d18:1(4E)) + N-acetylneuraminate. The catalysed reaction is a ganglioside GM3 + H2O = a beta-D-galactosyl-(1-&gt;4)-beta-D-glucosyl-(1&lt;-&gt;1)-ceramide + N-acetylneuraminate. The enzyme catalyses a ganglioside GM1 + H2O = a ganglioside GA1 + N-acetylneuraminate. It catalyses the reaction a ganglioside GM1 (d18:1(4E)) + H2O = a ganglioside GA1 (d18:1(4E)) + N-acetylneuraminate. It carries out the reaction a ganglioside GM2 (d18:1(4E)) + H2O = a ganglioside GA2 (d18:1(4E)) + N-acetylneuraminate. The catalysed reaction is a ganglioside GM3 (d18:1(4E)) + H2O = a beta-D-Gal-(1-&gt;4)-beta-D-Glc-(1&lt;-&gt;1)-Cer(d18:1(4E)) + N-acetylneuraminate. The enzyme catalyses a ganglioside GT1b + H2O = a ganglioside GD1b + N-acetylneuraminate. In terms of biological role, exo-alpha-sialidase that catalyzes the hydrolytic cleavage of the terminal sialic acid (N-acetylneuraminic acid, Neu5Ac) of a glycan moiety in the catabolism of glycolipids, glycoproteins and oligosacharides. Displays high catalytic efficiency for gangliosides including alpha-(2-&gt;3)-sialylated GD1a and GM3 and alpha-(2-&gt;8)-sialylated GD3. Plays a role in the regulation of transmembrane signaling through the modulation of ganglioside content of the lipid bilayer and by direct interaction with signaling receptors, such as EGFR. Desialylates EGFR and activates downstream signaling in proliferating cells. Contributes to clathrin-mediated endocytosis by regulating sorting of endocytosed receptors to early and recycling endosomes. The sequence is that of Sialidase-3 (NEU3) from Homo sapiens (Human).